A 515-amino-acid polypeptide reads, in one-letter code: Probable malate:quinone oxidoreductase (515 aa).

The protein belongs to the MQO family. FAD is required as a cofactor.

The catalysed reaction is (S)-malate + a quinone = a quinol + oxaloacetate. The protein operates within carbohydrate metabolism; tricarboxylic acid cycle; oxaloacetate from (S)-malate (quinone route): step 1/1. This is Probable malate:quinone oxidoreductase from Blochmanniella pennsylvanica (strain BPEN).